We begin with the raw amino-acid sequence, 286 residues long: Putative sensory transducer protein YfmS (286 aa).

Positions 68–286 constitute a Methyl-accepting transducer domain; the sequence is ITDAIRSNQK…KMAEKALEEE (219 aa).

It belongs to the methyl-accepting chemotaxis (MCP) protein family.

Its function is as follows. Chemotactic-signal transducers respond to changes in the concentration of attractants and repellents in the environment, transduce a signal from the outside to the inside of the cell, and facilitate sensory adaptation through the variation of the level of methylation. Attractants increase the level of methylation while repellents decrease the level of methylation. In Bacillus subtilis (strain 168), this protein is Putative sensory transducer protein YfmS (yfmS).